The primary structure comprises 287 residues: Formamidopyrimidine-DNA glycosylase (287 aa).

Proline 2 (schiff-base intermediate with DNA) is an active-site residue. Glutamate 3 serves as the catalytic Proton donor. Lysine 58 acts as the Proton donor; for beta-elimination activity in catalysis. The DNA site is built by histidine 104, arginine 123, and arginine 166. The segment at 251-287 (RVYDREGQPCPTPGCKGMIGREVQAGRSTFFCPVCQV) adopts an FPG-type zinc-finger fold. Arginine 277 serves as the catalytic Proton donor; for delta-elimination activity.

This sequence belongs to the FPG family. Monomer. Zn(2+) is required as a cofactor.

The catalysed reaction is Hydrolysis of DNA containing ring-opened 7-methylguanine residues, releasing 2,6-diamino-4-hydroxy-5-(N-methyl)formamidopyrimidine.. It catalyses the reaction 2'-deoxyribonucleotide-(2'-deoxyribose 5'-phosphate)-2'-deoxyribonucleotide-DNA = a 3'-end 2'-deoxyribonucleotide-(2,3-dehydro-2,3-deoxyribose 5'-phosphate)-DNA + a 5'-end 5'-phospho-2'-deoxyribonucleoside-DNA + H(+). Functionally, involved in base excision repair of DNA damaged by oxidation or by mutagenic agents. Acts as a DNA glycosylase that recognizes and removes damaged bases. Has a preference for oxidized purines, such as 7,8-dihydro-8-oxoguanine (8-oxoG). Has AP (apurinic/apyrimidinic) lyase activity and introduces nicks in the DNA strand. Cleaves the DNA backbone by beta-delta elimination to generate a single-strand break at the site of the removed base with both 3'- and 5'-phosphates. The protein is Formamidopyrimidine-DNA glycosylase of Caulobacter sp. (strain K31).